Reading from the N-terminus, the 713-residue chain is Phosphoribosylformylglycinamidine synthase subunit PurL (713 aa).

Residue His-34 is part of the active site. ATP contacts are provided by Tyr-37 and Arg-73. Glu-75 is a Mg(2+) binding site. Residues 76-79 (SHNH) and Arg-98 contribute to the substrate site. The Proton acceptor role is filled by His-77. A Mg(2+)-binding site is contributed by Asp-99. Gln-221 serves as a coordination point for substrate. Residue Asp-249 coordinates Mg(2+). Position 292–294 (292–294 (ESQ)) interacts with substrate. ATP is bound by residues Asp-474 and Gly-511. Ser-514 provides a ligand contact to substrate.

It belongs to the FGAMS family. In terms of assembly, monomer. Part of the FGAM synthase complex composed of 1 PurL, 1 PurQ and 2 PurS subunits.

Its subcellular location is the cytoplasm. It catalyses the reaction N(2)-formyl-N(1)-(5-phospho-beta-D-ribosyl)glycinamide + L-glutamine + ATP + H2O = 2-formamido-N(1)-(5-O-phospho-beta-D-ribosyl)acetamidine + L-glutamate + ADP + phosphate + H(+). It functions in the pathway purine metabolism; IMP biosynthesis via de novo pathway; 5-amino-1-(5-phospho-D-ribosyl)imidazole from N(2)-formyl-N(1)-(5-phospho-D-ribosyl)glycinamide: step 1/2. Functionally, part of the phosphoribosylformylglycinamidine synthase complex involved in the purines biosynthetic pathway. Catalyzes the ATP-dependent conversion of formylglycinamide ribonucleotide (FGAR) and glutamine to yield formylglycinamidine ribonucleotide (FGAM) and glutamate. The FGAM synthase complex is composed of three subunits. PurQ produces an ammonia molecule by converting glutamine to glutamate. PurL transfers the ammonia molecule to FGAR to form FGAM in an ATP-dependent manner. PurS interacts with PurQ and PurL and is thought to assist in the transfer of the ammonia molecule from PurQ to PurL. This Ignicoccus hospitalis (strain KIN4/I / DSM 18386 / JCM 14125) protein is Phosphoribosylformylglycinamidine synthase subunit PurL.